Consider the following 511-residue polypeptide: Xylose import ATP-binding protein XylG (511 aa).

2 ABC transporter domains span residues Leu-6–Glu-244 and Phe-261–Pro-506. Gly-38–Ser-45 is a binding site for ATP.

The protein belongs to the ABC transporter superfamily. Xylose importer (TC 3.A.1.2.4) family. As to quaternary structure, the complex is composed of two ATP-binding proteins (XylG), two transmembrane proteins (XylH) and a solute-binding protein (XylF).

Its subcellular location is the cell inner membrane. The catalysed reaction is D-xylose(out) + ATP + H2O = D-xylose(in) + ADP + phosphate + H(+). Functionally, part of the ABC transporter complex XylFGH involved in xylose import. Responsible for energy coupling to the transport system. The polypeptide is Xylose import ATP-binding protein XylG (Brucella suis biovar 1 (strain 1330)).